Reading from the N-terminus, the 171-residue chain is Ribosome maturation factor RimM (171 aa).

Positions 97 to 170 constitute a PRC barrel domain; that stretch reads KLNYFSWDHY…IIYMKLPVGL (74 aa).

This sequence belongs to the RimM family. Binds ribosomal protein uS19.

Its subcellular location is the cytoplasm. In terms of biological role, an accessory protein needed during the final step in the assembly of 30S ribosomal subunit, possibly for assembly of the head region. Essential for efficient processing of 16S rRNA. May be needed both before and after RbfA during the maturation of 16S rRNA. It has affinity for free ribosomal 30S subunits but not for 70S ribosomes. The protein is Ribosome maturation factor RimM of Azobacteroides pseudotrichonymphae genomovar. CFP2.